The primary structure comprises 261 residues: tRNA pseudouridine synthase A (261 aa).

The Nucleophile role is filled by D51. Y109 contacts substrate.

Belongs to the tRNA pseudouridine synthase TruA family. As to quaternary structure, homodimer.

It carries out the reaction uridine(38/39/40) in tRNA = pseudouridine(38/39/40) in tRNA. Formation of pseudouridine at positions 38, 39 and 40 in the anticodon stem and loop of transfer RNAs. In Shewanella baltica (strain OS195), this protein is tRNA pseudouridine synthase A.